We begin with the raw amino-acid sequence, 83 residues long: Large ribosomal subunit protein bL27 (83 aa).

This sequence belongs to the bacterial ribosomal protein bL27 family.

In Thermotoga neapolitana (strain ATCC 49049 / DSM 4359 / NBRC 107923 / NS-E), this protein is Large ribosomal subunit protein bL27.